Consider the following 358-residue polypeptide: B3 domain-containing transcription factor NGA3 (358 aa).

The segment covering 1–14 (MDLSLAPTTTTSSD) has biased composition (polar residues). Positions 1–45 (MDLSLAPTTTTSSDQEQDRDQELTSNIGASSSSGPSGNNNNLPMM) are disordered. Residues 25–45 (SNIGASSSSGPSGNNNNLPMM) are compositionally biased toward low complexity. Residues 56–162 (FDKVVTPSDV…KLYIDWRHRP (107 aa)) constitute a DNA-binding region (TF-B3). Positions 310–358 (EIGASSSSSSALRLNLSTDHDDDNDDGDDGDDDQFAKKGKSSLSLNFNP) are disordered. The span at 329–342 (HDDDNDDGDDGDDD) shows a compositional bias: acidic residues.

It localises to the nucleus. Regulates lateral organ growth. Functionally redundant with NGA1, NGA2 and NGA4. The sequence is that of B3 domain-containing transcription factor NGA3 (NGA3) from Arabidopsis thaliana (Mouse-ear cress).